The primary structure comprises 381 residues: Heme A synthase (381 aa).

The segment at 1-28 is disordered; the sequence is MSNRTIFEEVSSDSKQQSSPTPGGIDRK. Transmembrane regions (helical) follow at residues 36 to 56, 125 to 145, 151 to 171, 187 to 207, 230 to 250, 287 to 307, 320 to 340, and 344 to 364; these read IRVW…VGGL, VIGL…SIPT, LLLP…MVAS, LATH…YMFL, STGL…VAGI, LVQF…VVVW, FAFN…IVTV, and APVE…VLIL. Residue His292 coordinates heme. His352 contacts heme.

It belongs to the COX15/CtaA family. Type 2 subfamily. As to quaternary structure, interacts with CtaB. The cofactor is heme b.

The protein localises to the cell membrane. It carries out the reaction Fe(II)-heme o + 2 A + H2O = Fe(II)-heme a + 2 AH2. The protein operates within porphyrin-containing compound metabolism; heme A biosynthesis; heme A from heme O: step 1/1. Catalyzes the conversion of heme O to heme A by two successive hydroxylations of the methyl group at C8. The first hydroxylation forms heme I, the second hydroxylation results in an unstable dihydroxymethyl group, which spontaneously dehydrates, resulting in the formyl group of heme A. The polypeptide is Heme A synthase (Ruegeria sp. (strain TM1040) (Silicibacter sp.)).